The chain runs to 98 residues: Cell division topological specificity factor (98 aa).

The protein belongs to the MinE family.

Prevents the cell division inhibition by proteins MinC and MinD at internal division sites while permitting inhibition at polar sites. This ensures cell division at the proper site by restricting the formation of a division septum at the midpoint of the long axis of the cell. In Methylorubrum populi (strain ATCC BAA-705 / NCIMB 13946 / BJ001) (Methylobacterium populi), this protein is Cell division topological specificity factor.